The chain runs to 310 residues: Probable metallo-hydrolase Mb2322c (310 aa).

Residues 1 to 29 (MVATRGRPCPTNFSRPQRPRVAGNGTKSQ) are disordered. Zn(2+)-binding residues include His137, Asp139, Asp141, His142, His221, Asp242, and His288.

This sequence belongs to the metallo-beta-lactamase superfamily. Zn(2+) is required as a cofactor.

The polypeptide is Probable metallo-hydrolase Mb2322c (Mycobacterium bovis (strain ATCC BAA-935 / AF2122/97)).